A 69-amino-acid polypeptide reads, in one-letter code: DNA gyrase inhibitor YacG (69 aa).

Cys14, Cys17, Cys33, and Cys37 together coordinate Zn(2+).

The protein belongs to the DNA gyrase inhibitor YacG family. Interacts with GyrB. Requires Zn(2+) as cofactor.

In terms of biological role, inhibits all the catalytic activities of DNA gyrase by preventing its interaction with DNA. Acts by binding directly to the C-terminal domain of GyrB, which probably disrupts DNA binding by the gyrase. The protein is DNA gyrase inhibitor YacG of Aliivibrio salmonicida (strain LFI1238) (Vibrio salmonicida (strain LFI1238)).